The following is a 295-amino-acid chain: (R)-phenoxypropionate/alpha-ketoglutarate-dioxygenase (295 aa).

The Fe cation site is built by His111 and Asp113. Thr138 and Trp255 together coordinate 2-oxoglutarate. His270 provides a ligand contact to Fe cation. Arg281 contributes to the 2-oxoglutarate binding site.

Belongs to the TfdA dioxygenase family. Homotrimer. The cofactor is Fe cation. It depends on L-ascorbate as a cofactor.

The catalysed reaction is (R)-2-(4-chloro-2-methylphenoxy)propanoate + 2-oxoglutarate + O2 = 2-methyl-4-chlorophenol + pyruvate + succinate + CO2. It catalyses the reaction (R)-(2,4-dichlorophenoxy)propanoate + 2-oxoglutarate + O2 = 2,4-dichlorophenol + pyruvate + succinate + CO2. It participates in xenobiotic degradation; 2-(2,4-dichlorophenoxy)propanoate degradation. Its activity is regulated as follows. Inhibited by divalent cations, most significantly by copper and nickel, and by diethylpyrocarbonate (DEPC). In terms of biological role, involved in the degradation of the phenoxypropionate herbicides. Catalyzes the enantiospecific cleavage of the ether bond in the herbicid R-dichlorprop ((R)-2-(2,4-dichlorophenoxy)propionate)(R-2,4-DP) and R-mecoprop ((R)-2-(4-chloro-2-methylphenoxy)propionate)(R-2,4-MCPP). It can also accept (RS)-2-(2,4,5-trichlorophenoxy)propionate, (RS)-2-(4-chlorophenoxy)propionate, (RS)-2-(m-chlorophenoxy)propionate, however it can only accept 2-oxoglutarate as oxygen acceptor. The chain is (R)-phenoxypropionate/alpha-ketoglutarate-dioxygenase from Delftia acidovorans (Pseudomonas acidovorans).